Consider the following 488-residue polypeptide: Transmembrane protein 39A (488 aa).

Residues N31 and N39 are each glycosylated (N-linked (GlcNAc...) asparagine). A run of 8 helical transmembrane segments spans residues 72–92, 110–130, 154–174, 182–202, 287–307, 319–339, 420–440, and 446–466; these read SLLFEFLFFIYLLVALFIQYI, TSLNFHLIDYHLAAFITVMLA, VLISARLVLLTLCGWVLCWTL, SVLNLLFLGYPFGVYVPLCCF, EVLFNSLFSAYYVAFLPLCFV, CEHLIMVWINAFVMLTTQLLP, LLNLLILIEGSVVFYQLYSLL, and NHTLSMALILFCNYYVLFKLL.

It belongs to the TMEM39 family. Interacts with SACM1L, SEC23A and SEC24A.

The protein resides in the endoplasmic reticulum membrane. Regulates autophagy by controlling the spatial distribution and levels of the intracellular phosphatidylinositol 4-phosphate (PtdIns(4)P) pools. Modulates (PtdIns(4)P) levels by regulating the ER-to-Golgi trafficking of the phosphatidylinositide phosphatase SACM1L. The chain is Transmembrane protein 39A (TMEM39A) from Bos taurus (Bovine).